The primary structure comprises 754 residues: Protein neuralized (754 aa).

The 155-residue stretch at 106 to 260 (PLQFHSVHGD…NCTGIEFLDS (155 aa)) folds into the NHR 1 domain. Low complexity predominate over residues 280 to 297 (QQQQMPQPAANASSALNS). The tract at residues 280-308 (QQQQMPQPAANASSALNSHHPHQQSRRSL) is disordered. Phosphoserine is present on residues S338 and S341. An NHR 2 domain is found at 368-523 (PVPFHNTKGR…STQSLRMFRQ (156 aa)). The RING-type zinc finger occupies 701 to 742 (CTICYENPIDSVLYMCGHMCMCYDCAIEQWRGVGGGQCPLCR).

It is found in the nucleus. Its function is as follows. Involved in neurogenesis. Interacts with other neurogenic proteins in the specification of the neuroblast versus epidermoblast cell fate. The polypeptide is Protein neuralized (neur) (Drosophila melanogaster (Fruit fly)).